The primary structure comprises 71 residues: MPIVKVRENEPFDVALRRFKRSCEKAGILADVRAREFYEKPTTARKRAKAAAVKRLAKKLSRENARRVRLY.

It belongs to the bacterial ribosomal protein bS21 family.

This is Small ribosomal subunit protein bS21 from Shewanella amazonensis (strain ATCC BAA-1098 / SB2B).